Consider the following 575-residue polypeptide: E3 ubiquitin-protein ligase kcmf-1 (575 aa).

The ZZ-type zinc finger occupies 9-73 (HEGVSCDGCA…PMQLILSSVD (65 aa)). Zn(2+) contacts are provided by Cys-14, Cys-17, Cys-29, Cys-32, Cys-38, Cys-41, His-59, and His-63. Disordered stretches follow at residues 277–306 (PIYP…DDND) and 530–575 (EADE…INID). Acidic residues-rich tracts occupy residues 297–306 (SADESEDDND) and 530–563 (EADE…ENDS).

This sequence belongs to the KCMF1 family.

It localises to the cytoplasm. The protein localises to the late endosome. The protein resides in the lysosome. The catalysed reaction is S-ubiquitinyl-[E2 ubiquitin-conjugating enzyme]-L-cysteine + [acceptor protein]-L-lysine = [E2 ubiquitin-conjugating enzyme]-L-cysteine + N(6)-ubiquitinyl-[acceptor protein]-L-lysine.. The protein operates within protein modification; protein ubiquitination. Its function is as follows. E3 ubiquitin-protein ligase which accepts ubiquitin from an E2 ubiquitin-conjugating enzyme and then transfers it to targeted substrates, promoting their degradation by the proteasome. This Caenorhabditis elegans protein is E3 ubiquitin-protein ligase kcmf-1.